Consider the following 145-residue polypeptide: CBS domain-containing protein DDB_G0289609 (145 aa).

CBS domains lie at 9–66 (MSKS…FLPE) and 84–141 (MKQN…LEPV).

The sequence is that of CBS domain-containing protein DDB_G0289609 from Dictyostelium discoideum (Social amoeba).